The primary structure comprises 681 residues: Chaperone protein HtpG (681 aa).

The a; substrate-binding stretch occupies residues 1–326 (MQKGNIGVTT…SPDIPLNVSR (326 aa)). The b stretch occupies residues 327–545 (SYLQSDSNVK…YMRRMKEMAN (219 aa)). The tract at residues 546–681 (IQAGMSFYGE…NFVKRSIELI (136 aa)) is c. Residues 601–620 (DALKKKQEGKKDEDIPTAEK) are disordered.

This sequence belongs to the heat shock protein 90 family. As to quaternary structure, homodimer.

The protein localises to the cytoplasm. Its function is as follows. Molecular chaperone. Has ATPase activity. The chain is Chaperone protein HtpG from Bacteroides fragilis (strain ATCC 25285 / DSM 2151 / CCUG 4856 / JCM 11019 / LMG 10263 / NCTC 9343 / Onslow / VPI 2553 / EN-2).